Consider the following 230-residue polypeptide: Porin OmpL (230 aa).

The first 20 residues, 1-20 (MKSLNTLVILTSVISTSVFA), serve as a signal peptide directing secretion.

It belongs to the oligogalacturonate-specific porin KdgM (TC 1.B.35) family. OmpL subfamily.

The protein resides in the cell outer membrane. Its function is as follows. Outer membrane channel protein that allows an efficient diffusion of low-molecular-weight solutes such as small sugars and tetraglycine. However, the specific substrate recognized by the OmpL channel is unknown. The polypeptide is Porin OmpL (ompL) (Salmonella typhimurium (strain LT2 / SGSC1412 / ATCC 700720)).